The chain runs to 127 residues: Ribonuclease P protein component (127 aa).

This sequence belongs to the RnpA family. As to quaternary structure, consists of a catalytic RNA component (M1 or rnpB) and a protein subunit.

It carries out the reaction Endonucleolytic cleavage of RNA, removing 5'-extranucleotides from tRNA precursor.. In terms of biological role, RNaseP catalyzes the removal of the 5'-leader sequence from pre-tRNA to produce the mature 5'-terminus. It can also cleave other RNA substrates such as 4.5S RNA. The protein component plays an auxiliary but essential role in vivo by binding to the 5'-leader sequence and broadening the substrate specificity of the ribozyme. The protein is Ribonuclease P protein component of Corynebacterium urealyticum (strain ATCC 43042 / DSM 7109).